The primary structure comprises 250 residues: Probable transcriptional regulatory protein RER_29220 (250 aa).

Belongs to the TACO1 family.

It localises to the cytoplasm. This Rhodococcus erythropolis (strain PR4 / NBRC 100887) protein is Probable transcriptional regulatory protein RER_29220.